A 657-amino-acid chain; its full sequence is Penicillin-binding protein activator LpoA (657 aa).

A signal peptide spans 1–25 (MLSSTFVRSKAGLVPVILAALILAA). Cysteine 26 carries N-palmitoyl cysteine lipidation. The S-diacylglycerol cysteine moiety is linked to residue cysteine 26.

This sequence belongs to the LpoA family. In terms of assembly, interacts with PBP1a.

It is found in the cell outer membrane. Regulator of peptidoglycan synthesis that is essential for the function of penicillin-binding protein 1A (PBP1a). This is Penicillin-binding protein activator LpoA from Yersinia pseudotuberculosis serotype O:1b (strain IP 31758).